A 495-amino-acid chain; its full sequence is UDP-N-acetylmuramoyl-L-alanyl-D-glutamate--2,6-diaminopimelate ligase (495 aa).

UDP-N-acetyl-alpha-D-muramoyl-L-alanyl-D-glutamate is bound by residues Leu27, Ser29, and 44–46 (HQA). ATP is bound at residue 116–122 (GTNGKTT). UDP-N-acetyl-alpha-D-muramoyl-L-alanyl-D-glutamate contacts are provided by residues Asn157, 158–159 (TT), Ser185, Gln191, and Arg193. Residue Lys225 is modified to N6-carboxylysine. Meso-2,6-diaminopimelate is bound by residues Arg390, 414–417 (DNPR), Gly465, and Glu469. The short motif at 414–417 (DNPR) is the Meso-diaminopimelate recognition motif element.

This sequence belongs to the MurCDEF family. MurE subfamily. Requires Mg(2+) as cofactor. Carboxylation is probably crucial for Mg(2+) binding and, consequently, for the gamma-phosphate positioning of ATP.

It localises to the cytoplasm. It catalyses the reaction UDP-N-acetyl-alpha-D-muramoyl-L-alanyl-D-glutamate + meso-2,6-diaminopimelate + ATP = UDP-N-acetyl-alpha-D-muramoyl-L-alanyl-gamma-D-glutamyl-meso-2,6-diaminopimelate + ADP + phosphate + H(+). It participates in cell wall biogenesis; peptidoglycan biosynthesis. Functionally, catalyzes the addition of meso-diaminopimelic acid to the nucleotide precursor UDP-N-acetylmuramoyl-L-alanyl-D-glutamate (UMAG) in the biosynthesis of bacterial cell-wall peptidoglycan. The chain is UDP-N-acetylmuramoyl-L-alanyl-D-glutamate--2,6-diaminopimelate ligase from Salmonella choleraesuis (strain SC-B67).